Consider the following 810-residue polypeptide: Plasminogen (810 aa).

Residues 1 to 19 (MEHKEVVLLLLLFLKSGQG) form the signal peptide. The PAN domain maps to 20–98 (EPLDDYVNTQ…RDVVLFEKKV (79 aa)). 12 disulfide bridges follow: cysteine 49–cysteine 73, cysteine 53–cysteine 61, cysteine 103–cysteine 181, cysteine 124–cysteine 164, cysteine 152–cysteine 176, cysteine 185–cysteine 262, cysteine 188–cysteine 316, cysteine 206–cysteine 245, cysteine 234–cysteine 257, cysteine 275–cysteine 352, cysteine 296–cysteine 335, and cysteine 324–cysteine 347. Kringle domains lie at 103 to 181 (CKTG…ILEC) and 184 to 262 (ECMH…IPRC). Positions 126-145 (KWSSTSPHRPRFSPATHPSE) are disordered. L-lysine-binding residues include arginine 136, aspartate 158, and arginine 172. An O-linked (GalNAc...) serine glycan is attached at serine 268. The Kringle 3 domain maps to 275 to 352 (CLKGTGENYR…RWEYCKIPSC (78 aa)). N-linked (GlcNAc...) asparagine glycosylation is present at asparagine 308. A glycan (O-linked (GalNAc...) threonine) is linked at threonine 365. Intrachain disulfides connect cysteine 377–cysteine 454, cysteine 398–cysteine 437, cysteine 426–cysteine 449, cysteine 481–cysteine 560, cysteine 502–cysteine 543, cysteine 531–cysteine 555, cysteine 567–cysteine 685, cysteine 577–cysteine 585, and cysteine 607–cysteine 623. Kringle domains follow at residues 377–454 (CYHG…LKKC) and 481–560 (CMFG…VPQC). Positions 396–416 (KKCQSWSSMTPHRHQKTPENY) are disordered. L-lysine-binding residues include aspartate 432 and arginine 445. One can recognise a Peptidase S1 domain in the interval 581-808 (VVGGCVAHPH…FVTWIEGVMR (228 aa)). Residue serine 597 is modified to Phosphoserine. Active-site charge relay system residues include histidine 622 and aspartate 665. A Phosphoserine modification is found at serine 688. Disulfide bonds link cysteine 699–cysteine 766, cysteine 729–cysteine 745, and cysteine 756–cysteine 784. Serine 760 acts as the Charge relay system in catalysis.

It belongs to the peptidase S1 family. Plasminogen subfamily. In terms of assembly, interacts (both mature PLG and the angiostatin peptide) with CSPG4 and AMOT. Interacts (via the Kringle domains) with HRG; the interaction tethers PLG to the cell surface and enhances its activation. Interacts (via Kringle 4 domain) with ADA; the interaction stimulates PLG activation when in complex with DPP4. Angiostatin: Interacts with ATP5F1A; the interaction inhibits most of the angiogenic effects of angiostatin. Interacts (plasmin) with iripin-8, a serine protease inhibitor from Ixodes ricinus saliva. Interacts (plasmin) with iripin-1, a serine protease inhibitor from Ixodes ricinus saliva. Interacts (plasmin) with Kazal-type trypsin inhibitor, a serine protease inhibitor from Aedes aegypti. (Microbial infection) Interacts with C.albicans GPD2; the interaction is direct and provides active plasmin on the surface of fungal cells. As to quaternary structure, (Microbial infection) Interacts with Staphylococcus aureus protein FnbB; this interaction provides active plasmin on the surface of bacterial cells. In terms of assembly, (Microbial infection) Interacts with P.falciparum (strain NF54) enolase ENO (via DKSLVK motif); the interaction occurs at the ookinete cell surface and is required for ookinete invasion of the mosquito midgut. (Microbial infection) Interacts with B.burgdorferi OspC. N-linked glycan contains N-acetyllactosamine and sialic acid. O-linked glycans consist of Gal-GalNAc disaccharide modified with up to 2 sialic acid residues (microheterogeneity). In terms of processing, in the presence of the inhibitor, the activation involves only cleavage after Arg-580, yielding two chains held together by two disulfide bonds. In the absence of the inhibitor, the activation involves additionally the removal of the activation peptide. Post-translationally, (Microbial infection) The Y.pestis Pla protein cleaves between Arg-580 and Val-581, generating plasmin which facilitates bacterial migration and infection. Present in plasma and many other extracellular fluids. It is synthesized in the liver.

It is found in the secreted. It catalyses the reaction Preferential cleavage: Lys-|-Xaa &gt; Arg-|-Xaa, higher selectivity than trypsin. Converts fibrin into soluble products.. With respect to regulation, converted into plasmin by plasminogen activators, both plasminogen and its activator being bound to fibrin. Activated with catalytic amounts of streptokinase. Plasmin activity inhibited by SERPINE2. Functionally, plasmin dissolves the fibrin of blood clots and acts as a proteolytic factor in a variety of other processes including embryonic development, tissue remodeling, tumor invasion, and inflammation. In ovulation, weakens the walls of the Graafian follicle. It activates the urokinase-type plasminogen activator, collagenases and several complement zymogens, such as C1, C4 and C5. Cleavage of fibronectin and laminin leads to cell detachment and apoptosis. Also cleaves fibrin, thrombospondin and von Willebrand factor. Its role in tissue remodeling and tumor invasion may be modulated by CSPG4. Binds to cells. Its function is as follows. Angiostatin is an angiogenesis inhibitor that blocks neovascularization and growth of experimental primary and metastatic tumors in vivo. In terms of biological role, (Microbial infection) ENO/enoloase from parasite P.falciparum (strain NF54) interacts with PLG present in the mosquito blood meal to promote the invasion of the mosquito midgut by the parasite ookinete. The catalytic active form, plasmin, is essential for the invasion of the mosquito midgut. (Microbial infection) Binds to OspC on the surface of B.burgdorferi cells, possibly conferring an extracellular protease activity on the bacteria that allows it to traverse host tissue. Functionally, (Microbial infection) Interacts with dengue virus type 2 particles. Enhances dengue virus type 2 infection in Aedes aegypti mosquito midgut by increasing midgut internalization, resulting in higher infection rates and viral dissemination in mosquitoes. This Homo sapiens (Human) protein is Plasminogen (PLG).